The following is a 644-amino-acid chain: Adhesion G-protein coupled receptor F2 (644 aa).

Residues 1–18 form the signal peptide; sequence MIPAHWLYCLMLLLPIES. Topologically, residues 19–386 are extracellular; it reads CRILCQASSK…ESPVLTYITY (368 aa). Residues Asn155, Asn219, Asn293, and Asn311 are each glycosylated (N-linked (GlcNAc...) asparagine). Residues 233–377 form the GAIN-B domain; that stretch reads SRGSLGKNFT…SILMSPNTLE (145 aa). Disulfide bonds link Cys329–Cys356 and Cys344–Cys358. The interval 329–377 is GPS; sequence CVGWHSLESRWDWRACKTIQENSRQAVCRCRPNKLYTSFSILMSPNTLE. A helical transmembrane segment spans residues 387-407; sequence IGLGISICSLIICLAIEVLVW. The Cytoplasmic portion of the chain corresponds to 408–422; the sequence is SQVTKTEISYLRHLC. Residues 423 to 443 traverse the membrane as a helical segment; the sequence is IANIAATLLMADAWFIVASFL. At 444–465 the chain is on the extracellular side; that stretch reads SGPVLHHNGCVAATFFVHFFYL. The chain crosses the membrane as a helical span at residues 466-486; the sequence is SVFFWMLAKALLILYGILIVF. Residues 487 to 493 are Cytoplasmic-facing; that stretch reads HTLPKSC. A helical membrane pass occupies residues 494–514; that stretch reads LVASLFSVGYGCPLVIAIITL. Residues 515–541 lie on the Extracellular side of the membrane; the sequence is AVTEPGKGYLRPEACWLNWDMTKALLA. Residues 542–562 form a helical membrane-spanning segment; it reads FVVPALAIVVVNLITVTMVII. The Cytoplasmic portion of the chain corresponds to 563–585; the sequence is KTQRAAIGSSMFQEVRAIVRICK. The helical transmembrane segment at 586 to 606 threads the bilayer; it reads NIAILTPLLGLTWGFGIATVI. Topologically, residues 607-610 are extracellular; it reads NGHS. Residues 611–631 traverse the membrane as a helical segment; sequence LAFHIIFSLLNALQVSPDAAV.

The protein belongs to the G-protein coupled receptor 2 family. Adhesion G-protein coupled receptor (ADGR) subfamily. In terms of tissue distribution, mainly expressed in skin and heart, and very weakly in lung and spleen. Detected in all epidermal layers of skin.

The protein resides in the membrane. Functionally, orphan receptor. The chain is Adhesion G-protein coupled receptor F2 (Adgrf2) from Mus musculus (Mouse).